The sequence spans 216 residues: Noggin-1 (216 aa).

An N-terminal signal peptide occupies residues 1 to 18 (MDFPRFLLSAYLLLLSFA). N-linked (GlcNAc...) asparagine glycosylation occurs at asparagine 55.

It belongs to the noggin family. As to quaternary structure, homodimer; disulfide-linked.

Its subcellular location is the secreted. In terms of biological role, inhibitor of bone morphogenetic proteins (BMP) signaling. May play an important role in the dorsoventral patterning of the embryo. This Danio rerio (Zebrafish) protein is Noggin-1 (nog1).